Consider the following 77-residue polypeptide: Apelin (77 aa).

The first 22 residues, 1 to 22 (MNLRRCVQALLLLWLCLSAVCG), serve as a signal peptide directing secretion. Positions 23–41 (GPLLQTSDGKEMEEGTIRY) are excised as a propeptide. The segment at 43–77 (VQPRGPRSGPGPWQGGRRKFRRQRPRLSHKGPMPF) is disordered. Residues 58–71 (GRRKFRRQRPRLSH) are compositionally biased toward basic residues. At Gln-65 the chain carries Pyrrolidone carboxylic acid.

The protein belongs to the apelin family. In terms of processing, at least 5 active peptides may be produced by proteolytic processing of the peptide precursor.

It is found in the secreted. Its subcellular location is the extracellular space. Its function is as follows. Peptide hormone that functions as endogenous ligand for the G-protein-coupled apelin receptor (APLNR/APJ), that plays a role in cadiovascular homeostasis. Functions as a balanced agonist activating both G(i) protein pathway and beta-arrestin pathway of APLNR. Downstream G proteins activation, apelin can inhibit cAMP production and activate key intracellular effectors such as ERKs. On the other hand, APLNR activation induces beta-arrestin recruitment to the membrane leading to desensitization and internalization of the receptor. Apelin blunts cardiac hypertrophic induction from APLNR on response to pathological stimuli, but also induces myocardial hypertrophy under normal conditions. Apelin-36 dissociates more hardly than (pyroglu)apelin-13 from APLNR. Involved in the regulation of cardiac precursor cell movements during gastrulation and heart morphogenesis. Has an inhibitory effect on cytokine production in response to T-cell receptor/CD3 cross-linking; the oral intake of apelin in the colostrum and the milk might therefore modulate immune responses in neonates. Plays a role in early coronary blood vessels formation. Mediates myocardial contractility in an ERK1/2-dependent manner. May also have a role in the central control of body fluid homeostasis by influencing vasopressin release and drinking behavior. This is Apelin (APLN) from Bos taurus (Bovine).